The chain runs to 181 residues: MTPEFANDLKASVRAIPDYPKPGIIFRDITTLLGEPRAFRRAIDELVQPWAGSKIDKVAGIEARGFIIGGAIAHQVSSGFVPIRKKGKLPHTCVSMEYALEYGTDKIEVHVDAITPGERVILVDDLIATGGTAEGAIKLLRQIGAEVVAACFVIDLPELGGAAKIRAMGVPVRTLVAFEGH.

It belongs to the purine/pyrimidine phosphoribosyltransferase family. In terms of assembly, homodimer.

Its subcellular location is the cytoplasm. The catalysed reaction is AMP + diphosphate = 5-phospho-alpha-D-ribose 1-diphosphate + adenine. Its pathway is purine metabolism; AMP biosynthesis via salvage pathway; AMP from adenine: step 1/1. Functionally, catalyzes a salvage reaction resulting in the formation of AMP, that is energically less costly than de novo synthesis. This chain is Adenine phosphoribosyltransferase, found in Rhodopseudomonas palustris (strain ATCC BAA-98 / CGA009).